The sequence spans 230 residues: Large ribosomal subunit protein uL1 (230 aa).

This sequence belongs to the universal ribosomal protein uL1 family. As to quaternary structure, part of the 50S ribosomal subunit.

Functionally, binds directly to 23S rRNA. The L1 stalk is quite mobile in the ribosome, and is involved in E site tRNA release. Its function is as follows. Protein L1 is also a translational repressor protein, it controls the translation of the L11 operon by binding to its mRNA. The polypeptide is Large ribosomal subunit protein uL1 (Afipia carboxidovorans (strain ATCC 49405 / DSM 1227 / KCTC 32145 / OM5) (Oligotropha carboxidovorans)).